We begin with the raw amino-acid sequence, 274 residues long: NADPH-dependent 7-cyano-7-deazaguanine reductase (274 aa).

80 to 82 (VES) serves as a coordination point for substrate. 82–83 (SK) provides a ligand contact to NADPH. Catalysis depends on Cys181, which acts as the Thioimide intermediate. The active-site Proton donor is the Asp188. 220 to 221 (HE) contacts substrate. An NADPH-binding site is contributed by 249–250 (RG).

The protein belongs to the GTP cyclohydrolase I family. QueF type 2 subfamily. In terms of assembly, homodimer.

It localises to the cytoplasm. It carries out the reaction 7-aminomethyl-7-carbaguanine + 2 NADP(+) = 7-cyano-7-deazaguanine + 2 NADPH + 3 H(+). It functions in the pathway tRNA modification; tRNA-queuosine biosynthesis. Its function is as follows. Catalyzes the NADPH-dependent reduction of 7-cyano-7-deazaguanine (preQ0) to 7-aminomethyl-7-deazaguanine (preQ1). The polypeptide is NADPH-dependent 7-cyano-7-deazaguanine reductase (Burkholderia lata (strain ATCC 17760 / DSM 23089 / LMG 22485 / NCIMB 9086 / R18194 / 383)).